Here is a 799-residue protein sequence, read N- to C-terminus: Phenylalanine--tRNA ligase beta subunit (799 aa).

The tRNA-binding domain maps to 39 to 150 (GKGFSGVIVG…EHLQAGTALN (112 aa)). The region spanning 402–478 (FLELTIRCRL…RIYGYDHIPR (77 aa)) is the B5 domain. Residues aspartate 456, aspartate 462, glutamate 465, and glutamate 466 each contribute to the Mg(2+) site. In terms of domain architecture, FDX-ACB spans 705–798 (AIYPGSERDW…VSQKFANDLK (94 aa)).

It belongs to the phenylalanyl-tRNA synthetase beta subunit family. Type 1 subfamily. Tetramer of two alpha and two beta subunits. It depends on Mg(2+) as a cofactor.

It is found in the cytoplasm. It carries out the reaction tRNA(Phe) + L-phenylalanine + ATP = L-phenylalanyl-tRNA(Phe) + AMP + diphosphate + H(+). In Protochlamydia amoebophila (strain UWE25), this protein is Phenylalanine--tRNA ligase beta subunit.